The chain runs to 574 residues: Multidrug and toxin extrusion protein 1 (574 aa).

Over 1–51 (MEGQAAETNHRAETVVRAELCLSAEQGPETTAYSQKRCLFLPMEVWQEAQQ) the chain is Cytoplasmic. Residues 52 to 72 (LLALAAPAFLSQLMIFLISIV) form a helical membrane-spanning segment. Residues 73 to 86 (SSIFCGHLGKVELD) are Extracellular-facing. The chain crosses the membrane as a helical span at residues 87-107 (AVSLAITIINITGVAVGTGLA). The Cytoplasmic portion of the chain corresponds to 108–133 (GACDTLISQTFGGSNLKLVGIILQRG). The helical transmembrane segment at 134–154 (ILILLLFCFPCWALLINTESI) threads the bilayer. Residues 155 to 168 (LLLFRQDPEVSKLT) are Extracellular-facing. The chain crosses the membrane as a helical span at residues 169-189 (QIYVLIFLPALPAAFLYQLLA). Topologically, residues 190-204 (KYLQNQGIIYPQVLT) are cytoplasmic. Residues 205-225 (GFIANIFNALFNYILLYVLGL) traverse the membrane as a helical segment. The Extracellular segment spans residues 226–230 (GVMGS). A helical membrane pass occupies residues 231-251 (ACANTVSQFIQMILLFLYIVW). At 252-271 (RRLYADTWGGWSQACFEEWG) the chain is on the cytoplasmic side. A helical membrane pass occupies residues 272–291 (AFIRLAVASMLMLCIEWWAF). At 292 to 309 (EISMFLAGVLGMVDLAAQ) the chain is on the extracellular side. The helical transmembrane segment at 310 to 330 (AIIYQVAIVVYLIPLGLCIAG) threads the bilayer. Topologically, residues 331–350 (SIRVGHGLGAGNTEQAKRSA) are cytoplasmic. The helical transmembrane segment at 351–371 (LVVLCMTELCALLSGILLATL) threads the bilayer. Residues 372-384 (KDVVAYIFTSDPN) are Extracellular-facing. A helical membrane pass occupies residues 385 to 405 (IVALVSYVLPVYSACLLFDAC). Topologically, residues 406–430 (VAACGGILRGSGKLKVGAISHTVGY) are cytoplasmic. The helical transmembrane segment at 431 to 451 (YVIGLPLGISLMFAAKLGIIG) threads the bilayer. Residues 452–453 (FW) are Extracellular-facing. The helical transmembrane segment at 454–472 (FGILACGIAQSIFLIIFVF) threads the bilayer. Residues 473–549 (KIDWKRASEE…AGAAQHTRTL (77 aa)) are Cytoplasmic-facing. The segment at 500–541 (KPSVYQEGCPTEQGDVDPGNVESIEFSQSSTSSEGTSPTPAG) is disordered. Residues 521 to 538 (ESIEFSQSSTSSEGTSPT) are compositionally biased toward low complexity. Residues 550–570 (ILTRGLALGCAVGTLIIGIVI) form a helical membrane-spanning segment. Residues 571-574 (RLSV) lie on the Extracellular side of the membrane.

Belongs to the multi antimicrobial extrusion (MATE) (TC 2.A.66.1) family.

Its subcellular location is the cell membrane. The protein localises to the apical cell membrane. The catalysed reaction is thiamine(out) + H(+)(in) = thiamine(in) + H(+)(out). It catalyses the reaction estrone 3-sulfate(in) + H(+)(out) = estrone 3-sulfate(out) + H(+)(in). It carries out the reaction creatinine(in) + H(+)(out) = creatinine(out) + H(+)(in). The enzyme catalyses agmatine(in) + H(+)(out) = agmatine(out) + H(+)(in). Multidrug efflux pump that functions as a H(+)/organic cation antiporter. Mediates the secretion of cationic compounds including drugs, toxins and endogenous metabolites. Plays a role physiological role in the excretion of drugs, toxins and endogenous metabolites through the kidney and liver, into urine and bile respectively. The protein is Multidrug and toxin extrusion protein 1 (slc47a1) of Xenopus tropicalis (Western clawed frog).